The following is a 465-amino-acid chain: Calcitonin gene-related peptide type 1 receptor (465 aa).

Positions 1 to 17 (MVICLLLCTPTDIFVVA) are cleaved as a signal peptide. Residues 18-141 (SPEVNETQEY…HTNEGRMTAM (124 aa)) lie on the Extracellular side of the membrane. N-linked (GlcNAc...) asparagine glycosylation is found at N22, N68, N120, and N125. Disulfide bonds link C50–C76, C67–C107, and C90–C129. A helical membrane pass occupies residues 142 to 166 (NLFYLALIGHGLSLTSLLISLGIFF). At 167–177 (YFKSLSCQRIT) the chain is on the cytoplasmic side. Residues 178 to 200 (LHKNLFFSFVLNSVITIIWLTAV) traverse the membrane as a helical segment. Over 201–211 (ANNQELVQRNP) the chain is Extracellular. A helical membrane pass occupies residues 212-240 (TSCKVSQFIHLYLFGCNYFWMLCEGIYLH). The Cytoplasmic portion of the chain corresponds to 241 to 254 (TLIVVAVFAEKQHL). Residues 255–275 (MWYYLLGWGFPLIPASIHAIA) form a helical membrane-spanning segment. Residues 276 to 291 (RSYYYNDNCWISSNTS) are Extracellular-facing. Residue N289 is glycosylated (N-linked (GlcNAc...) asparagine). Residues 292–316 (LLYIIHGPICAALLVNLFFLLNIVR) traverse the membrane as a helical segment. Over 317–331 (VLITKLKVTHQAESS) the chain is Cytoplasmic. The chain crosses the membrane as a helical span at residues 332–353 (LYMKAVRATLILVPLLGIQYVL). Residues 354 to 368 (LPYKPEGRVSSEIYD) lie on the Extracellular side of the membrane. A helical transmembrane segment spans residues 369–389 (YIMHILMHYQGLLVATIFCFF). The Cytoplasmic portion of the chain corresponds to 390 to 465 (NGEVQGVLRR…SILKSENPFT (76 aa)).

The protein belongs to the G-protein coupled receptor 2 family.

The protein localises to the cell membrane. Functionally, may function as G protein-coupled receptor for calcitonin-gene-related peptides and adrenomedullin. Specificity may be modulated by accessory proteins. May activate cAMP-dependent pathway. The chain is Calcitonin gene-related peptide type 1 receptor (calcrl) from Oncorhynchus gorbuscha (Pink salmon).